A 395-amino-acid chain; its full sequence is Membrane glycoprotein spo14 (395 aa).

The Cytoplasmic segment spans residues 1–346 (MAELHLSFPA…KLEDAGVILR (346 aa)). WD repeat units follow at residues 250–285 (MIRD…RFMS) and 290–326 (KLSQ…CLQF). The helical; Signal-anchor for type II membrane protein transmembrane segment at 347–367 (LSLMFPFVLAILYFYLQLLFP) threads the bilayer. At 368–395 (DEKLDAIHRFFSFILHIFSKYTIRNYDL) the chain is on the lumenal side.

Its subcellular location is the endoplasmic reticulum membrane. The protein localises to the golgi apparatus. The protein resides in the cis-Golgi network membrane. Functionally, required for the formation of transport vesicles from the ER. This function involves the cytoplasmic domain of the protein, which is thought to interact with the small GTP-binding protein sar1. The polypeptide is Membrane glycoprotein spo14 (spo14) (Schizosaccharomyces pombe (strain 972 / ATCC 24843) (Fission yeast)).